The following is a 1089-amino-acid chain: MGTSHPAFLVLGCLLTGLSLILCQLSLPSILPNENEKVVQLNSSFSLRCFGESEVSWQYPMSEEESSDVEIRNEENNSGLFVTVLEVSSASAAHTGLYTCYYNHTQTEENELEGRHIYIYVPDPDVAFVPLGMTDYLVIVEDDDSAIIPCRTTDPETPVTLHNSEGVVPASYDSRQGFNGTFTVGPYICEATVKGKKFQTIPFNVYALKATSELDLEMEALKTVYKSGETIVVTCAVFNNEVVDLQWTYPGEVKGKGITMLEEIKVPSIKLVYTLTVPEATVKDSGDYECAARQATREVKEMKKVTISVHEKGFIEIKPTFSQLEAVNLHEVKHFVVEVRAYPPPRISWLKNNLTLIENLTEITTDVEKIQEIRYRSKLKLIRAKEEDSGHYTIVAQNEDAVKSYTFELLTQVPSSILDLVDDHHGSTGGQTVRCTAEGTPLPDIEWMICKDIKKCNNETSWTILANNVSNIITEIHSRDRSTVEGRVTFAKVEETIAVRCLAKNLLGAENRELKLVAPTLRSELTVAAAVLVLLVIVIISLIVLVVIWKQKPRYEIRWRVIESISPDGHEYIYVDPMQLPYDSRWEFPRDGLVLGRVLGSGAFGKVVEGTAYGLSRSQPVMKVAVKMLKPTARSSEKQALMSELKIMTHLGPHLNIVNLLGACTKSGPIYIITEYCFYGDLVNYLHKNRDSFLSHHPEKPKKELDIFGLNPADESTRSYVILSFENNGDYMDMKQADTTQYVPMLERKEVSKYSDIQRSLYDRPASYKKKSMLDSEVKNLLSDDNSEGLTLLDLLSFTYQVARGMEFLASKNCVHRDLAARNVLLAQGKIVKICDFGLARDIMHDSNYVSKGSTFLPVKWMAPESIFDNLYTTLSDVWSYGILLWEIFSLGGTPYPGMMVDSTFYNKIKSGYRMAKPDHATSEVYEIMVKCWNSEPEKRPSFYHLSEIVENLLPGQYKKSYEKIHLDFLKSDHPAVARMRVDSDNAYIGVTYKNEEDKLKDWEGGLDEQRLSADSGYIIPLPDIDPVPEEEDLGKRNRHSSQTSEESAIETGSSSSTFIKREDETIEDIDMMDDIGIDSSDLVEDSFL.

The first 23 residues, 1–23 (MGTSHPAFLVLGCLLTGLSLILC), serve as a signal peptide directing secretion. Ig-like C2-type domains lie at 24–113 (QLSL…NELE), 117–201 (IYIY…FQTI), 202–306 (PFNV…KKVT), 319–410 (PTFS…FELL), and 414–517 (PSSI…LKLV). Over 24-528 (QLSLPSILPN…PTLRSELTVA (505 aa)) the chain is Extracellular. N-linked (GlcNAc...) asparagine glycans are attached at residues N42, N76, N103, and N179. The cysteines at positions 49 and 100 are disulfide-linked. Cystine bridges form between C150-C189 and C235-C290. Residues N353, N359, N458, and N468 are each glycosylated (N-linked (GlcNAc...) asparagine). A disulfide bond links C435 and C501. Residues 529 to 549 (AAVLVLLVIVIISLIVLVVIW) traverse the membrane as a helical segment. The Cytoplasmic portion of the chain corresponds to 550–1089 (KQKPRYEIRW…SSDLVEDSFL (540 aa)). 2 positions are modified to phosphotyrosine; by autocatalysis: Y572 and Y574. The 362-residue stretch at 593-954 (LVLGRVLGSG…HLSEIVENLL (362 aa)) folds into the Protein kinase domain. ATP is bound by residues 599-607 (LGSGAFGKV) and K627. Residues Y720, Y731, Y742, Y754, Y762, and Y768 each carry the phosphotyrosine; by autocatalysis modification. Catalysis depends on D818, which acts as the Proton acceptor. 3 positions are modified to phosphotyrosine; by autocatalysis: Y849, Y988, and Y1018. Residues 1018-1089 (YIIPLPDIDP…SSDLVEDSFL (72 aa)) form a disordered region. Over residues 1041–1059 (SSQTSEESAIETGSSSSTF) the composition is skewed to polar residues. Over residues 1065–1089 (ETIEDIDMMDDIGIDSSDLVEDSFL) the composition is skewed to acidic residues.

The protein belongs to the protein kinase superfamily. Tyr protein kinase family. CSF-1/PDGF receptor subfamily. Interacts with homodimeric PDGFA, PDGFB and PDGFC, and with heterodimers formed by PDGFA and PDGFB. Monomer in the absence of bound ligand. Interaction with dimeric PDGFA, PDGFB and/or PDGFC leads to receptor dimerization, where both PDGFRA homodimers and heterodimers with PDGFRB are observed. Interacts (tyrosine phosphorylated) with SHB (via SH2 domain). Interacts (tyrosine phosphorylated) with SHF (via SH2 domain). Interacts (tyrosine phosphorylated) with SRC (via SH2 domain). Interacts (tyrosine phosphorylated) with PIK3R1. Interacts (tyrosine phosphorylated) with PLCG1 (via SH2 domain). Interacts (tyrosine phosphorylated) with CRK, GRB2 and GRB7. Interacts with CD248; this interaction promotes PDGF receptor signaling pathway. As to quaternary structure, (Microbial infection) Interacts with human cytomegalovirus/HHV-5 envelope glycoprotein B/gB. Also interacts with the trimeric complex gH-gL-gO. Trimer-PDGFRA interaction has an inhibitory effect on PDGFRA signaling. In terms of processing, N-glycosylated. Ubiquitinated, leading to its internalization and degradation. Post-translationally, autophosphorylated on tyrosine residues upon ligand binding. Autophosphorylation occurs in trans, i.e. one subunit of the dimeric receptor phosphorylates tyrosine residues on the other subunit. Phosphorylation at Tyr-731 and Tyr-742 is important for interaction with PIK3R1. Phosphorylation at Tyr-720 and Tyr-754 is important for interaction with PTPN11. Phosphorylation at Tyr-762 is important for interaction with CRK. Phosphorylation at Tyr-572 and Tyr-574 is important for interaction with SRC and SRC family members. Phosphorylation at Tyr-988 and Tyr-1018 is important for interaction with PLCG1. As to expression, detected in platelets (at protein level). Widely expressed. Detected in brain, fibroblasts, smooth muscle, heart, and embryo. Expressed in primary and metastatic colon tumors and in normal colon tissue.

The protein localises to the cell membrane. Its subcellular location is the cell projection. It localises to the cilium. The protein resides in the golgi apparatus. It catalyses the reaction L-tyrosyl-[protein] + ATP = O-phospho-L-tyrosyl-[protein] + ADP + H(+). With respect to regulation, present in an inactive conformation in the absence of bound ligand. Binding of PDGFA and/or PDGFB leads to dimerization and activation by autophosphorylation on tyrosine residues. Inhibited by imatinib, nilotinib and sorafenib. Its function is as follows. Tyrosine-protein kinase that acts as a cell-surface receptor for PDGFA, PDGFB and PDGFC and plays an essential role in the regulation of embryonic development, cell proliferation, survival and chemotaxis. Depending on the context, promotes or inhibits cell proliferation and cell migration. Plays an important role in the differentiation of bone marrow-derived mesenchymal stem cells. Required for normal skeleton development and cephalic closure during embryonic development. Required for normal development of the mucosa lining the gastrointestinal tract, and for recruitment of mesenchymal cells and normal development of intestinal villi. Plays a role in cell migration and chemotaxis in wound healing. Plays a role in platelet activation, secretion of agonists from platelet granules, and in thrombin-induced platelet aggregation. Binding of its cognate ligands - homodimeric PDGFA, homodimeric PDGFB, heterodimers formed by PDGFA and PDGFB or homodimeric PDGFC -leads to the activation of several signaling cascades; the response depends on the nature of the bound ligand and is modulated by the formation of heterodimers between PDGFRA and PDGFRB. Phosphorylates PIK3R1, PLCG1, and PTPN11. Activation of PLCG1 leads to the production of the cellular signaling molecules diacylglycerol and inositol 1,4,5-trisphosphate, mobilization of cytosolic Ca(2+) and the activation of protein kinase C. Phosphorylates PIK3R1, the regulatory subunit of phosphatidylinositol 3-kinase, and thereby mediates activation of the AKT1 signaling pathway. Mediates activation of HRAS and of the MAP kinases MAPK1/ERK2 and/or MAPK3/ERK1. Promotes activation of STAT family members STAT1, STAT3 and STAT5A and/or STAT5B. Receptor signaling is down-regulated by protein phosphatases that dephosphorylate the receptor and its down-stream effectors, and by rapid internalization of the activated receptor. In Homo sapiens (Human), this protein is Platelet-derived growth factor receptor alpha (PDGFRA).